A 138-amino-acid chain; its full sequence is ATP synthase epsilon chain (138 aa).

It belongs to the ATPase epsilon chain family. In terms of assembly, F-type ATPases have 2 components, CF(1) - the catalytic core - and CF(0) - the membrane proton channel. CF(1) has five subunits: alpha(3), beta(3), gamma(1), delta(1), epsilon(1). CF(0) has three main subunits: a, b and c.

It localises to the cell inner membrane. Produces ATP from ADP in the presence of a proton gradient across the membrane. In Delftia acidovorans (strain DSM 14801 / SPH-1), this protein is ATP synthase epsilon chain.